Consider the following 112-residue polypeptide: Cell cycle protein GpsB (112 aa).

Residues 42 to 77 (YQKMADMNNEVVKLSEENNKLKKEVEELRLRVATSR) adopt a coiled-coil conformation. The disordered stretch occupies residues 75-97 (TSRPSDNKSFSSNNSSSSNNNVD). A compositionally biased stretch (low complexity) spans 81–95 (NKSFSSNNSSSSNNN).

It belongs to the GpsB family. In terms of assembly, forms polymers through the coiled coil domains. Interacts with PBP1, MreC and EzrA.

It is found in the cytoplasm. Functionally, divisome component that associates with the complex late in its assembly, after the Z-ring is formed, and is dependent on DivIC and PBP2B for its recruitment to the divisome. Together with EzrA, is a key component of the system that regulates PBP1 localization during cell cycle progression. Its main role could be the removal of PBP1 from the cell pole after pole maturation is completed. Also contributes to the recruitment of PBP1 to the division complex. Not essential for septum formation. The protein is Cell cycle protein GpsB of Staphylococcus haemolyticus (strain JCSC1435).